Consider the following 438-residue polypeptide: 5-methylthioadenosine/S-adenosylhomocysteine deaminase (438 aa).

Zn(2+)-binding residues include His71 and His73. The substrate site is built by Glu100 and His192. His219 is a binding site for Zn(2+). Substrate contacts are provided by Glu222 and Asp307. Asp307 lines the Zn(2+) pocket.

Belongs to the metallo-dependent hydrolases superfamily. MTA/SAH deaminase family. It depends on Zn(2+) as a cofactor.

The enzyme catalyses S-adenosyl-L-homocysteine + H2O + H(+) = S-inosyl-L-homocysteine + NH4(+). It carries out the reaction S-methyl-5'-thioadenosine + H2O + H(+) = S-methyl-5'-thioinosine + NH4(+). In terms of biological role, catalyzes the deamination of 5-methylthioadenosine and S-adenosyl-L-homocysteine into 5-methylthioinosine and S-inosyl-L-homocysteine, respectively. Is also able to deaminate adenosine. This chain is 5-methylthioadenosine/S-adenosylhomocysteine deaminase, found in Syntrophobacter fumaroxidans (strain DSM 10017 / MPOB).